The chain runs to 248 residues: Killer cell lectin-like receptor subfamily I member 1 (248 aa).

Residues 1-80 (MLHSKRREYT…RQGPKSTVWR (80 aa)) are Cytoplasmic-facing. 2 consecutive short sequence motifs (ITIM motif) follow at residues 16-21 (VTYTEL) and 47-52 (LKYGEL). Residues 81 to 101 (VVTGMLGALCVVLMTTTGILL) traverse the membrane as a helical; Signal-anchor for type II membrane protein segment. At 102–248 (PKLFSSQEEQ…KKSYICEFNI (147 aa)) the chain is on the extracellular side. 3 cysteine pairs are disulfide-bonded: Cys-132–Cys-145, Cys-161–Cys-244, and Cys-223–Cys-236. A C-type lectin domain is found at 139 to 245 (FGNNFYCVFK…CSAKKSYICE (107 aa)). 3 N-linked (GlcNAc...) asparagine glycosylation sites follow: Asn-197, Asn-214, and Asn-220.

Heterodimer with KLRE1. Interacts with PTPN6. In terms of tissue distribution, expressed in natural killer (NK) cells.

It localises to the cell membrane. Functionally, lectin-like receptor for natural killer (NK) cells. Heterodimer formation with KLRE1 mediates inhibition of NK cell cytolytic activity. The protein is Killer cell lectin-like receptor subfamily I member 1 of Mus musculus (Mouse).